A 475-amino-acid chain; its full sequence is Aspartyl/glutamyl-tRNA(Asn/Gln) amidotransferase subunit B (475 aa).

The protein belongs to the GatB/GatE family. GatB subfamily. As to quaternary structure, heterotrimer of A, B and C subunits.

It catalyses the reaction L-glutamyl-tRNA(Gln) + L-glutamine + ATP + H2O = L-glutaminyl-tRNA(Gln) + L-glutamate + ADP + phosphate + H(+). The catalysed reaction is L-aspartyl-tRNA(Asn) + L-glutamine + ATP + H2O = L-asparaginyl-tRNA(Asn) + L-glutamate + ADP + phosphate + 2 H(+). Functionally, allows the formation of correctly charged Asn-tRNA(Asn) or Gln-tRNA(Gln) through the transamidation of misacylated Asp-tRNA(Asn) or Glu-tRNA(Gln) in organisms which lack either or both of asparaginyl-tRNA or glutaminyl-tRNA synthetases. The reaction takes place in the presence of glutamine and ATP through an activated phospho-Asp-tRNA(Asn) or phospho-Glu-tRNA(Gln). This chain is Aspartyl/glutamyl-tRNA(Asn/Gln) amidotransferase subunit B, found in Staphylococcus aureus (strain COL).